A 371-amino-acid chain; its full sequence is Hsc70-interacting protein (371 aa).

The interval 38-80 (MGGKVPPATHKAKSEENTKEEKRDKTTEENIKTEELSSEESDL) is disordered. Residues 49 to 72 (AKSEENTKEEKRDKTTEENIKTEE) are compositionally biased toward basic and acidic residues. TPR repeat units lie at residues 113 to 146 (ANEK…NPRL), 147 to 180 (AILY…NPDS), and 181 to 214 (AQPY…DYDE). Residues 255–271 (KAREEHERAQREEEARR) are compositionally biased toward basic and acidic residues. Residues 255–296 (KAREEHERAQREEEARRQSGSQYGSFPGGFPGGMPGNFPGGM) are disordered. Residues 280-296 (FPGGFPGGMPGNFPGGM) show a composition bias toward gly residues. The 40-residue stretch at 321–360 (DPEVLAAMQDPEVMVAFQDVAQNPSNMSKYQSNPKVMNLI) folds into the STI1 domain. Serine 348 bears the Phosphoserine; by GRK5 mark. N6-acetyllysine occurs at positions 355 and 362.

It belongs to the FAM10 family. Homotetramer. Interacts with HSC70 as well as DNAJ homologs and HSP90. Interacts (via the C-terminus 302- 318 AA) with GRK5.

It localises to the cytoplasm. Its function is as follows. One HIP oligomer binds the ATPase domains of at least two HSC70 molecules dependent on activation of the HSC70 ATPase by HSP40. Stabilizes the ADP state of HSC70 that has a high affinity for substrate protein. Through its own chaperone activity, it may contribute to the interaction of HSC70 with various target proteins. This is Hsc70-interacting protein (St13) from Mus musculus (Mouse).